A 763-amino-acid polypeptide reads, in one-letter code: Phosphoglycerol transferase I (763 aa).

Transmembrane regions (helical) follow at residues 1-21 (MSEL…AWKA), 26-46 (WWFA…ITLY), 77-97 (ILPG…LGWV), and 108-128 (VGYS…SPAF).

It belongs to the OpgB family.

It localises to the cell inner membrane. The catalysed reaction is a phosphatidylglycerol + a membrane-derived-oligosaccharide D-glucose = a 1,2-diacyl-sn-glycerol + a membrane-derived-oligosaccharide 6-(glycerophospho)-D-glucose.. It functions in the pathway glycan metabolism; osmoregulated periplasmic glucan (OPG) biosynthesis. Functionally, transfers a phosphoglycerol residue from phosphatidylglycerol to the membrane-bound nascent glucan backbones. The sequence is that of Phosphoglycerol transferase I from Salmonella schwarzengrund (strain CVM19633).